The sequence spans 92 residues: RNA-binding protein Hfq (92 aa).

The region spanning 9–68 is the Sm domain; the sequence is DPFLNALRRERVPVSIYLVNGIKLQGQVESFDQFVILLKNTVSQMVYKHAISTVVPSRPF. Positions 73-82 are enriched in polar residues; that stretch reads HQATNAQAGY. The disordered stretch occupies residues 73–92; that stretch reads HQATNAQAGYNAQHDDGDEK.

Belongs to the Hfq family. As to quaternary structure, homohexamer.

Functionally, RNA chaperone that binds small regulatory RNA (sRNAs) and mRNAs to facilitate mRNA translational regulation in response to envelope stress, environmental stress and changes in metabolite concentrations. Also binds with high specificity to tRNAs. The sequence is that of RNA-binding protein Hfq from Shewanella pealeana (strain ATCC 700345 / ANG-SQ1).